Here is a 122-residue protein sequence, read N- to C-terminus: Piercer of microtubule wall 2 protein (122 aa).

Residues 1-23 (MARETDCDLDKKTSLTSDAEMRP) show a composition bias toward basic and acidic residues. 2 disordered regions span residues 1-26 (MARETDCDLDKKTSLTSDAEMRPEPP) and 99-122 (QNNSLNVGPDRTRTIDSPNYQHTL). Residues 113 to 122 (IDSPNYQHTL) show a composition bias toward polar residues.

This sequence belongs to the PIERCE2 family. Microtubule inner protein component of sperm flagellar doublet microtubules. Interacts with CFAP53, ODAD1 and ODAD3; the interactions link the outer dynein arms docking complex (ODA-DC) to the internal microtubule inner proteins (MIP) in cilium axoneme.

It localises to the cytoplasm. Its subcellular location is the cytoskeleton. The protein localises to the cilium axoneme. The protein resides in the flagellum axoneme. Microtubule inner protein involved in the attachment of outer dynein arms (ODAs) to dynein-decorated doublet microtubules (DMTs) in cilia axoneme, which is required for motile cilia beating. The protein is Piercer of microtubule wall 2 protein of Mus musculus (Mouse).